The primary structure comprises 251 residues: Malonyl-[acyl-carrier protein] O-methyltransferase (251 aa).

This sequence belongs to the methyltransferase superfamily.

The catalysed reaction is malonyl-[ACP] + S-adenosyl-L-methionine = malonyl-[ACP] methyl ester + S-adenosyl-L-homocysteine. The protein operates within cofactor biosynthesis; biotin biosynthesis. Converts the free carboxyl group of a malonyl-thioester to its methyl ester by transfer of a methyl group from S-adenosyl-L-methionine (SAM). It allows to synthesize pimeloyl-ACP via the fatty acid synthetic pathway. The chain is Malonyl-[acyl-carrier protein] O-methyltransferase from Enterobacter lignolyticus (strain SCF1).